Reading from the N-terminus, the 223-residue chain is Adapter protein MecA (223 aa).

Belongs to the MecA family. As to quaternary structure, homodimer.

Its function is as follows. Enables the recognition and targeting of unfolded and aggregated proteins to the ClpC protease or to other proteins involved in proteolysis. This Limosilactobacillus reuteri (strain DSM 20016) (Lactobacillus reuteri) protein is Adapter protein MecA.